The chain runs to 256 residues: METYVNKLHEGSTYTAAVQYNVLEKDDDPASLTIWVPMFQSSMPADLLIKELANVNILVKQISTPKGPSLRVMINSRSALLAQMPSKFTICANVSLDERSKLAYDVTTPCEIKACSLTCLKSKNMLTTVKDLTMKTLNPTHDIIALCEFENIVTSKKVIIPTYLRSISVRNKDLNTLENITTTEFKNAITNAKIIPYSGLLLVITVTDNKGAFKYIKPQSQFIVDLGAYLEKESIYYVTTNWKHTATRFAIKPMED.

An interaction with M2-1 region spans residues 1-110 (METYVNKLHE…KLAYDVTTPC (110 aa)). The interval 110–183 (CEIKACSLTC…LNTLENITTT (74 aa)) is nuclear targeting and binding to host importin KPNB1. Residues 194 to 206 (IIPYSGLLLVITV) carry the Nuclear export signal motif. The residue at position 205 (threonine 205) is a Phosphothreonine.

This sequence belongs to the pneumovirinae M protein family. Forms dimers. Forms higher-order oligomers. Interacts with glycoprotein G (via N-terminus). Interacts with protein M2-1; this interaction directs the matrix protein localization to cytoplasmic inclusions comprising viral proteins L, N, P, and M2-1 and mediates the matrix protein association with the nucleocapsid. Interacts with host importin KPNB1; this interaction mediates nuclear import of the matrix protein early during infection. Interacts with host AP3M1; this interaction plays an essential role in trafficking the matrix protein in host cells. Interacts with host CAV1; this interaction probably facilitates viral budding. Interacts with host CFL1; this interaction probably facilitates viral replication. Interacts with host ZNF502; this interaction probably facilitates viral release. Interacts with host RACK1. Phosphorylation is important for oligomerization.

Its subcellular location is the virion. It localises to the host cytoplasm. The protein resides in the host nucleus. The protein localises to the host cell membrane. Its function is as follows. Plays a crucial role in virus assembly into filaments and budding. Early in infection, localizes in the nucleus where it inhibits host cell transcription through direct binding to host chromatin. Later in infection, traffics to the cytoplasm through the action of host CRM1 to associate with inclusion bodies, the site of viral transcription and replication. During virus assembly and budding, acts as a bridge between the nucleocapsid and the lipid bilayer. Also plays a role in the inhibition of host interferon-beta response in a RACK1-dependent manner. The sequence is that of Matrix protein (M) from Homo sapiens (Human).